Consider the following 659-residue polypeptide: Heparin-sulfate lyase (659 aa).

A signal peptide spans 1-24 (MTTKIFKRIIVFAVIALSSGNILA). Y294 acts as the Proton acceptor in catalysis.

This sequence belongs to the polysaccharide lyase 12 family.

It localises to the periplasm. The enzyme catalyses Elimination of sulfate, appears to act on linkages between N-acetyl-D-glucosamine and uronate. Product is an unsaturated sugar.. In terms of biological role, specifically cleaves heparan sulfate-rich regions of acidic polysaccharides. Does not act on N,O-desulfated glucosamine or N-acetyl-O-sulfated glucosamine linkages. Functions in cleaving metazoan heparan sulfate and providing carbon, nitrogen and sulfate sources for microorganisms. In Pedobacter heparinus (strain ATCC 13125 / DSM 2366 / CIP 104194 / JCM 7457 / NBRC 12017 / NCIMB 9290 / NRRL B-14731 / HIM 762-3), this protein is Heparin-sulfate lyase (hepC).